We begin with the raw amino-acid sequence, 245 residues long: Nucleoprotein (245 aa).

RNA contacts are provided by tyrosine 30, lysine 67, arginine 106, arginine 186, and serine 196.

It belongs to the phlebovirus nucleocapsid protein family. Homodimer. Homohexamer; ring-shaped, necessary to form the nucleocapsid. Homopentamers; opened pentamers in solution. Binds to viral genomic RNA. Interacts with glycoprotein Gn; this interaction allows packaging of nucleocapsids into virions.

The protein resides in the virion. The protein localises to the host cytoplasm. Its subcellular location is the host nucleus. It localises to the host endoplasmic reticulum-Golgi intermediate compartment. It is found in the host Golgi apparatus. Encapsidates the genomic RNA, protecting it from nucleases. Displays high affinity for single-stranded nucleic acid. The encapsidated genomic RNA is termed the nucleocapsid (NC) or ribonucleoprotein. The ribonucleoprotein has a non-helical structure. Serves as template for viral transcription and replication. After replication, the nucleocapsid is recruited to the host Golgi apparatus by glycoprotein Gn for packaging into virus particles. This chain is Nucleoprotein (NP), found in Dabie bandavirus (Severe fever with thrombocytopenia virus).